The following is a 621-amino-acid chain: MEIVSRAWESVDWDRIQTRVEAEVTALGQRQDDSEIRKTRLVEESNAYRGRTNKDSRKVAIPLIKAFQSEFDGLLARSTAAENALIDICKSIVSLPDPKSLLKGAEAWKNDAEKTQKAVEEREELKRQLIKVNNELEDLRGKDVKVRKLKDKLAKLESEQDIFIENAVNEVEKKAEQELNDRLTELIAEKEKMKEQNEILEKNMDSLESKNKDIQRKLEIAKQTVEQKDGLENEQLSIAMKDLADAKHKIVFLEERVSQLENEAEKVNESKKAGNIEDIAALGSVLVQKDDVIQQLTNDIKRHEASHVEELAKWKLAVSAVEKKNKTLIGELNELKNQLESRNDYEAIKNELRLLREIEFGDSAEANAESIERLGETVETLDRLLAEKNRRLQNENASLRVANDGFKGRNEEQEAELTVLKEKSERNDRLIAQLEADLASAVQDIGIPERMGTNEMLKDAPAPTISDASLVPILTSQRNRLHERVTSLEEAISLEKTKQLSVQNEIERVREENIRLCERIRFLQSPGGQQQANVEAGLGNDFRNGNRNKKVSLHDKTTLNMGRAILATPKSRTVFFSYLLILHALIMLVLYKFAFDQSVVRDAETECEYKFHQHMLDNHKQ.

Residues 1-574 (MEIVSRAWES…ILATPKSRTV (574 aa)) are Cytoplasmic-facing. Coiled coils occupy residues 101–445 (LLKG…VQDI) and 473–525 (ILTS…FLQS). The chain crosses the membrane as a helical; Anchor for type IV membrane protein span at residues 575 to 595 (FFSYLLILHALIMLVLYKFAF). Topologically, residues 596-621 (DQSVVRDAETECEYKFHQHMLDNHKQ) are lumenal.

This sequence belongs to the CASP family.

The protein resides in the golgi apparatus membrane. Functionally, may be involved in intra-Golgi retrograde transport. This is Protein CASP (ceh-44) from Caenorhabditis elegans.